Consider the following 220-residue polypeptide: Adenylate kinase (220 aa).

Gly-10 to Thr-15 is a binding site for ATP. The segment at Ser-30–Val-59 is NMP. AMP-binding positions include Thr-31, Arg-36, Lys-57–Val-59, Gly-85–Arg-88, and Gln-92. The interval Gly-122–Gly-150 is disordered. Residues Gly-122–Asp-159 are LID. ATP is bound by residues Arg-123 and Thr-132 to Tyr-133. AMP is bound by residues Arg-156 and Arg-167. Gly-206 provides a ligand contact to ATP.

This sequence belongs to the adenylate kinase family. Monomer.

The protein localises to the cytoplasm. The enzyme catalyses AMP + ATP = 2 ADP. The protein operates within purine metabolism; AMP biosynthesis via salvage pathway; AMP from ADP: step 1/1. In terms of biological role, catalyzes the reversible transfer of the terminal phosphate group between ATP and AMP. Plays an important role in cellular energy homeostasis and in adenine nucleotide metabolism. This is Adenylate kinase from Burkholderia ambifaria (strain MC40-6).